Consider the following 112-residue polypeptide: MKEFHLHKYPVTSVEGNEYAVSIYNDRHSKGFVKVSLYKKVRGFFRKEKFKCLTREGDFAPSYFEEKWDYDYIQMAINEVINYENSIKEQINHENKQKAAIEKFEAWSGQEV.

The chain is SPbeta prophage-derived uncharacterized protein YoqB (yoqB) from Bacillus subtilis (strain 168).